The primary structure comprises 200 residues: Peroxiredoxin (200 aa).

One can recognise a Thioredoxin domain in the interval 6–165; sequence AQIGKPAPEF…TLRLVQAFQH (160 aa). Cys52 serves as the catalytic Cysteine sulfenic acid (-SOH) intermediate.

Belongs to the peroxiredoxin family. AhpC/Prx1 subfamily. In terms of assembly, homodimer; disulfide-linked, upon oxidation.

It carries out the reaction a hydroperoxide + [thioredoxin]-dithiol = an alcohol + [thioredoxin]-disulfide + H2O. Its function is as follows. Thiol-specific peroxidase that catalyzes the reduction of hydrogen peroxide and organic hydroperoxides to water and alcohols, respectively. Plays a role in cell protection against oxidative stress by detoxifying peroxides and as sensor of hydrogen peroxide-mediated signaling events. This is Peroxiredoxin from Cynops pyrrhogaster (Japanese fire-bellied newt).